A 204-amino-acid polypeptide reads, in one-letter code: MPIGVPKVPFRNPGEEDAVWVDVYNRLHRERLLFLGQEVDSEISNQIVGLMVYLSIEDDTRDLYLFINSPGGWVIPGIAIYDTMQFVLPDVHTICMGLAASMGSFILVGGEITKRLAFPHARVMIHQPASSFYEAQARDFILEAEELLKLRETLTKVYVQRTGNPLWVISEDMERDVFMSATEAQAHGIVDLVAIENENTGNSI.

Residue S101 is the Nucleophile of the active site. H126 is an active-site residue.

Belongs to the peptidase S14 family. As to quaternary structure, component of the chloroplastic Clp protease core complex.

Its subcellular location is the plastid. The protein localises to the chloroplast stroma. It catalyses the reaction Hydrolysis of proteins to small peptides in the presence of ATP and magnesium. alpha-casein is the usual test substrate. In the absence of ATP, only oligopeptides shorter than five residues are hydrolyzed (such as succinyl-Leu-Tyr-|-NHMec, and Leu-Tyr-Leu-|-Tyr-Trp, in which cleavage of the -Tyr-|-Leu- and -Tyr-|-Trp bonds also occurs).. In terms of biological role, cleaves peptides in various proteins in a process that requires ATP hydrolysis. Has a chymotrypsin-like activity. Plays a major role in the degradation of misfolded proteins. The chain is ATP-dependent Clp protease proteolytic subunit from Phalaenopsis aphrodite subsp. formosana (Moth orchid).